The sequence spans 205 residues: GTP cyclohydrolase-2 (205 aa).

49 to 53 (RIHSE) is a binding site for GTP. The Zn(2+) site is built by Cys-54, Cys-65, and Cys-67. GTP-binding positions include Gln-70, 92–94 (EGR), and Thr-114. Asp-126 (proton acceptor) is an active-site residue. The active-site Nucleophile is the Arg-128. Positions 149 and 154 each coordinate GTP.

The protein belongs to the GTP cyclohydrolase II family. It depends on Zn(2+) as a cofactor.

The catalysed reaction is GTP + 4 H2O = 2,5-diamino-6-hydroxy-4-(5-phosphoribosylamino)-pyrimidine + formate + 2 phosphate + 3 H(+). It participates in cofactor biosynthesis; riboflavin biosynthesis; 5-amino-6-(D-ribitylamino)uracil from GTP: step 1/4. Its function is as follows. Catalyzes the conversion of GTP to 2,5-diamino-6-ribosylamino-4(3H)-pyrimidinone 5'-phosphate (DARP), formate and pyrophosphate. The polypeptide is GTP cyclohydrolase-2 (Shewanella amazonensis (strain ATCC BAA-1098 / SB2B)).